The following is a 128-amino-acid chain: Large ribosomal subunit protein uL22 (128 aa).

Belongs to the universal ribosomal protein uL22 family. Part of the 50S ribosomal subunit.

This protein binds specifically to 23S rRNA; its binding is stimulated by other ribosomal proteins, e.g. L4, L17, and L20. It is important during the early stages of 50S assembly. It makes multiple contacts with different domains of the 23S rRNA in the assembled 50S subunit and ribosome. Functionally, the globular domain of the protein is located near the polypeptide exit tunnel on the outside of the subunit, while an extended beta-hairpin is found that lines the wall of the exit tunnel in the center of the 70S ribosome. In Prochlorococcus marinus (strain MIT 9312), this protein is Large ribosomal subunit protein uL22.